Here is a 258-residue protein sequence, read N- to C-terminus: uncharacterized protein (258 aa).

Polar residues predominate over residues 40–54 (AQKTDTPLDSSSYAV). Residues 40 to 63 (AQKTDTPLDSSSYAVTSPEEAPNE) are disordered.

This is an uncharacterized protein from Treponema pallidum (strain Nichols).